Consider the following 283-residue polypeptide: Protein/nucleic acid deglycase HchA (283 aa).

Zn(2+) is bound by residues histidine 86, glutamate 91, and histidine 123. The Nucleophile role is filled by cysteine 185.

The protein belongs to the peptidase C56 family. HchA subfamily. In terms of assembly, homodimer.

It localises to the cytoplasm. The enzyme catalyses N(omega)-(1-hydroxy-2-oxopropyl)-L-arginyl-[protein] + H2O = lactate + L-arginyl-[protein] + H(+). It catalyses the reaction N(6)-(1-hydroxy-2-oxopropyl)-L-lysyl-[protein] + H2O = lactate + L-lysyl-[protein] + H(+). It carries out the reaction S-(1-hydroxy-2-oxopropyl)-L-cysteinyl-[protein] + H2O = lactate + L-cysteinyl-[protein] + H(+). The catalysed reaction is N(omega)-(1-hydroxy-2-oxoethyl)-L-arginyl-[protein] + H2O = L-arginyl-[protein] + glycolate + H(+). The enzyme catalyses N(6)-(1-hydroxy-2-oxoethyl)-L-lysyl-[protein] + H2O = glycolate + L-lysyl-[protein] + H(+). It catalyses the reaction S-(1-hydroxy-2-oxoethyl)-L-cysteinyl-[protein] + H2O = glycolate + L-cysteinyl-[protein] + H(+). It carries out the reaction N(2)-(1-hydroxy-2-oxopropyl)-dGTP + H2O = lactate + dGTP + H(+). The catalysed reaction is N(2)-(1-hydroxy-2-oxopropyl)-GTP + H2O = lactate + GTP + H(+). The enzyme catalyses N(2)-(1-hydroxy-2-oxopropyl)-GDP + H2O = lactate + GDP + H(+). It catalyses the reaction N(2)-(1-hydroxy-2-oxopropyl)-GMP + H2O = lactate + GMP + H(+). It carries out the reaction N(2)-(1-hydroxy-2-oxoethyl)-dGTP + H2O = dGTP + glycolate + H(+). The catalysed reaction is N(2)-(1-hydroxy-2-oxoethyl)-GTP + H2O = glycolate + GTP + H(+). The enzyme catalyses N(2)-(1-hydroxy-2-oxoethyl)-GDP + H2O = glycolate + GDP + H(+). It catalyses the reaction N(2)-(1-hydroxy-2-oxoethyl)-GMP + H2O = glycolate + GMP + H(+). It carries out the reaction an N(2)-(1-hydroxy-2-oxopropyl)-guanosine in RNA + H2O = a guanosine in RNA + lactate + H(+). The catalysed reaction is an N(2)-(1-hydroxy-2-oxopropyl)-2'-deoxyguanosine in DNA + H2O = a 2'-deoxyguanosine in DNA + lactate + H(+). The enzyme catalyses an N(2)-(1-hydroxy-2-oxoethyl)-guanosine in RNA + H2O = a guanosine in RNA + glycolate + H(+). It catalyses the reaction an N(2)-(1-hydroxy-2-oxoethyl)-2'-deoxyguanosine in DNA + H2O = a 2'-deoxyguanosine in DNA + glycolate + H(+). Functionally, protein and nucleotide deglycase that catalyzes the deglycation of the Maillard adducts formed between amino groups of proteins or nucleotides and reactive carbonyl groups of glyoxals. Thus, functions as a protein deglycase that repairs methylglyoxal- and glyoxal-glycated proteins, and releases repaired proteins and lactate or glycolate, respectively. Deglycates cysteine, arginine and lysine residues in proteins, and thus reactivates these proteins by reversing glycation by glyoxals. Acts on early glycation intermediates (hemithioacetals and aminocarbinols), preventing the formation of Schiff bases and advanced glycation endproducts (AGE). Also functions as a nucleotide deglycase able to repair glycated guanine in the free nucleotide pool (GTP, GDP, GMP, dGTP) and in DNA and RNA. Is thus involved in a major nucleotide repair system named guanine glycation repair (GG repair), dedicated to reversing methylglyoxal and glyoxal damage via nucleotide sanitization and direct nucleic acid repair. Plays an important role in protecting cells from carbonyl stress. In Escherichia coli O8 (strain IAI1), this protein is Protein/nucleic acid deglycase HchA.